We begin with the raw amino-acid sequence, 137 residues long: 1,4-dihydroxy-2-naphthoyl-CoA hydrolase (137 aa).

The active site involves aspartate 13.

It belongs to the 4-hydroxybenzoyl-CoA thioesterase family. DHNA-CoA hydrolase subfamily.

It catalyses the reaction 1,4-dihydroxy-2-naphthoyl-CoA + H2O = 1,4-dihydroxy-2-naphthoate + CoA + H(+). It participates in cofactor biosynthesis; phylloquinone biosynthesis. The protein operates within quinol/quinone metabolism; 1,4-dihydroxy-2-naphthoate biosynthesis; 1,4-dihydroxy-2-naphthoate from chorismate: step 7/7. Its function is as follows. Catalyzes the hydrolysis of 1,4-dihydroxy-2-naphthoyl-CoA (DHNA-CoA) to 1,4-dihydroxy-2-naphthoate (DHNA), a reaction involved in phylloquinone (vitamin K1) biosynthesis. The polypeptide is 1,4-dihydroxy-2-naphthoyl-CoA hydrolase (Crocosphaera subtropica (strain ATCC 51142 / BH68) (Cyanothece sp. (strain ATCC 51142))).